The chain runs to 256 residues: Pimeloyl-[acyl-carrier protein] methyl ester esterase (256 aa).

Residues 15–242 (HLVLLHGWGL…AAHAPFISHP (228 aa)) form the AB hydrolase-1 domain. Substrate contacts are provided by residues Trp-22, 82 to 83 (SL), and 143 to 147 (FLALQ). The active-site Nucleophile is Ser-82. Catalysis depends on residues Asp-207 and His-235. Position 235 (His-235) interacts with substrate.

This sequence belongs to the AB hydrolase superfamily. Carboxylesterase BioH family. In terms of assembly, monomer.

The protein resides in the cytoplasm. It carries out the reaction 6-carboxyhexanoyl-[ACP] methyl ester + H2O = 6-carboxyhexanoyl-[ACP] + methanol + H(+). Its pathway is cofactor biosynthesis; biotin biosynthesis. Its function is as follows. The physiological role of BioH is to remove the methyl group introduced by BioC when the pimeloyl moiety is complete. It allows to synthesize pimeloyl-ACP via the fatty acid synthetic pathway through the hydrolysis of the ester bonds of pimeloyl-ACP esters. In Escherichia coli (strain SMS-3-5 / SECEC), this protein is Pimeloyl-[acyl-carrier protein] methyl ester esterase.